The primary structure comprises 840 residues: Leucine--tRNA ligase (840 aa).

The 'HIGH' region signature appears at 44-55 (PYPSANGLHVGH). The 'KMSKS' region motif lies at 617-621 (KMSKS). Residue Lys620 coordinates ATP.

Belongs to the class-I aminoacyl-tRNA synthetase family.

The protein localises to the cytoplasm. It catalyses the reaction tRNA(Leu) + L-leucine + ATP = L-leucyl-tRNA(Leu) + AMP + diphosphate. The polypeptide is Leucine--tRNA ligase (Borreliella afzelii (strain PKo) (Borrelia afzelii)).